The sequence spans 96 residues: Co-chaperonin GroES (96 aa).

Belongs to the GroES chaperonin family. Heptamer of 7 subunits arranged in a ring. Interacts with the chaperonin GroEL.

It is found in the cytoplasm. Functionally, together with the chaperonin GroEL, plays an essential role in assisting protein folding. The GroEL-GroES system forms a nano-cage that allows encapsulation of the non-native substrate proteins and provides a physical environment optimized to promote and accelerate protein folding. GroES binds to the apical surface of the GroEL ring, thereby capping the opening of the GroEL channel. This chain is Co-chaperonin GroES, found in Holospora obtusa.